A 333-amino-acid chain; its full sequence is Type II restriction enzyme XcyI (333 aa).

It belongs to the XcyI type II restriction endonuclease family. As to quaternary structure, monomer. Mg(2+) serves as cofactor.

The enzyme catalyses Endonucleolytic cleavage of DNA to give specific double-stranded fragments with terminal 5'-phosphates.. Its function is as follows. A P subtype restriction enzyme that recognizes the double-stranded sequence 5'-CCCGGG-3' and cleaves after C-1. In Xanthomonas campestris pv. cyanopsidis, this protein is Type II restriction enzyme XcyI (xcyIR).